Consider the following 294-residue polypeptide: uncharacterized protein (294 aa).

The signal sequence occupies residues 1–16; the sequence is MQNFMVLLLLIVAVVA. N-linked (GlcNAc...) asparagine; by host glycosylation is found at Asn-25 and Asn-162.

This is an uncharacterized protein from Acheta domesticus (House cricket).